The following is a 757-amino-acid chain: Zinc finger CCCH domain-containing protein 5 (757 aa).

Positions 1–127 are disordered; it reads MEQANEKEEE…REEEERRWKD (127 aa). Residues 13–35 show a composition bias toward basic and acidic residues; the sequence is HEEAAGEKESFEESKEKAAEMSR. The segment covering 36–50 has biased composition (basic residues); it reads KEKRKAMKKLKRKQV. Residues 51-127 are compositionally biased toward basic and acidic residues; sequence RKEIAAKERE…REEEERRWKD (77 aa). A C3H1-type 1 zinc finger spans residues 240-268; sequence EQDKAHCPFHLKTGACRFGQRCSRVHFYP. Residues 295 to 372 enclose the RRM domain; sequence YTDEEAELCY…KQVNCEFVNI (78 aa). A C3H1-type 2 zinc finger spans residues 374–404; that stretch reads RWKVAICGEYMKSRLKTCSRGSACNFIHCFR. The tract at residues 441–757 is disordered; that stretch reads HESSGSLNDS…EEEIERWRPV (317 aa). Polar residues predominate over residues 444–455; it reads SGSLNDSISDLS. The span at 487–546 shows a compositional bias: basic and acidic residues; the sequence is YHGDTQDSTREDKLRRHAENCHDGDDSPSRDGSLEREMYKERRYAKDTLHRDSRWSEHSP. 2 stretches are compositionally biased toward basic residues: residues 547–557 and 600–609; these read GHRVGRKRIHG and KTHRSSRKHS. 3 stretches are compositionally biased toward basic and acidic residues: residues 610–634, 644–672, and 681–721; these read REGS…DKSH, RSSS…KRSV, and SDKD…ETHK. The segment covering 722–733 has biased composition (basic residues); it reads ERRHRHRKRRRT.

The polypeptide is Zinc finger CCCH domain-containing protein 5 (Arabidopsis thaliana (Mouse-ear cress)).